We begin with the raw amino-acid sequence, 256 residues long: CCAAT/enhancer-binding protein delta (256 aa).

At Ser-2 the chain carries N-acetylserine. Disordered stretches follow at residues 18-40, 92-121, and 139-206; these read TAEP…AEPA, GGPA…APGS, and AAAQ…NQEM. Residue Lys-108 forms a Glycyl lysine isopeptide (Lys-Gly) (interchain with G-Cter in SUMO) linkage. A compositionally biased stretch (pro residues) spans 143–162; sequence PTPPASPEPPRRSPAPPAPG. Residues 164–188 show a composition bias toward basic and acidic residues; the sequence is ARDKAAGKRGPDRGSPEYRQRRERN. A bZIP domain is found at 178–241; it reads SPEYRQRRER…AGLRRFFKQL (64 aa). A basic motif region spans residues 182–209; sequence RQRRERNNIAVRKSRDKAKRRNQEMQQK. A leucine-zipper region spans residues 213–241; sequence LSAENEKLQQRVEQLTRDLAGLRRFFKQL.

This sequence belongs to the bZIP family. C/EBP subfamily. Binds DNA as a homodimer and as a heterodimer. Can form stable heterodimers with CEBPB. Can form stable heterodimers with CEBPA and CEBPE. Directly interacts with SPI1/PU.1; this interaction does not affect DNA-binding properties of each partner. Interacts with PRDM16.

The protein resides in the nucleus. Its function is as follows. Transcription activator that recognizes two different DNA motifs: the CCAAT homology common to many promoters and the enhanced core homology common to many enhancers. Important transcription factor regulating the expression of genes involved in immune and inflammatory responses. Transcriptional activator that enhances IL6 transcription alone and as heterodimer with CEBPB. This is CCAAT/enhancer-binding protein delta (CEBPD) from Bos taurus (Bovine).